The sequence spans 396 residues: Enoyl-[acyl-carrier-protein] reductase [NADH] (396 aa).

NAD(+) contacts are provided by residues G47–F52, F73–E74, D110–A111, and L138–A139. Y224 contributes to the substrate binding site. Y234 (proton donor) is an active-site residue. NAD(+) contacts are provided by residues K243 and L272–T274.

The protein belongs to the TER reductase family. Monomer.

It carries out the reaction a 2,3-saturated acyl-[ACP] + NAD(+) = a (2E)-enoyl-[ACP] + NADH + H(+). The protein operates within lipid metabolism; fatty acid biosynthesis. In terms of biological role, involved in the final reduction of the elongation cycle of fatty acid synthesis (FAS II). Catalyzes the reduction of a carbon-carbon double bond in an enoyl moiety that is covalently linked to an acyl carrier protein (ACP). This chain is Enoyl-[acyl-carrier-protein] reductase [NADH], found in Flavobacterium johnsoniae (strain ATCC 17061 / DSM 2064 / JCM 8514 / BCRC 14874 / CCUG 350202 / NBRC 14942 / NCIMB 11054 / UW101) (Cytophaga johnsonae).